The following is a 313-amino-acid chain: MSDSINTEPSTDTQTNGERTVETTSPSAETTAGESEEQVRDEWRHYEFDGDTKLSVENLDVWYGDDHALKDVSMEIPENSVTALIGPSGCGKSTYLRCLNRMNDRIKAARIDGSVELEGTEIYDPNANLVELRKRIGMVFQSPNPFPKSIRENISYGPRKHGDINKGLLARLFGRDDTEQEGELVERSLKQAALWEEVSDRLDDNALGLSGGQQQRLCIARCLAVDPEVILMDEPASALDPIATSKIEDLVEELSKDYTVVIVTHNMQQAARISDQTAVFLTGGELVEYDDTDKIFENPESQRVEDYITGKFG.

Positions 1–33 (MSDSINTEPSTDTQTNGERTVETTSPSAETTAG) are enriched in polar residues. The segment at 1–40 (MSDSINTEPSTDTQTNGERTVETTSPSAETTAGESEEQVR) is disordered. The ABC transporter domain maps to 54-308 (LSVENLDVWY…PESQRVEDYI (255 aa)). ATP is bound at residue 86–93 (GPSGCGKS).

The protein belongs to the ABC transporter superfamily. Phosphate importer (TC 3.A.1.7) family. The complex is composed of two ATP-binding proteins (PstB), two transmembrane proteins (PstC and PstA) and a solute-binding protein (PstS).

It is found in the cell membrane. The catalysed reaction is phosphate(out) + ATP + H2O = ADP + 2 phosphate(in) + H(+). Functionally, part of the ABC transporter complex PstSACB involved in phosphate import. Responsible for energy coupling to the transport system. In Haloarcula marismortui (strain ATCC 43049 / DSM 3752 / JCM 8966 / VKM B-1809) (Halobacterium marismortui), this protein is Phosphate import ATP-binding protein PstB 2.